Consider the following 309-residue polypeptide: tRNA N6-adenosine threonylcarbamoyltransferase (309 aa).

Fe cation-binding residues include histidine 108 and histidine 112. Substrate is bound by residues 130–134 (LVSGG), aspartate 163, glycine 176, aspartate 180, and asparagine 269. Aspartate 293 is a Fe cation binding site.

The protein belongs to the KAE1 / TsaD family. Requires Fe(2+) as cofactor.

The protein localises to the cytoplasm. The enzyme catalyses L-threonylcarbamoyladenylate + adenosine(37) in tRNA = N(6)-L-threonylcarbamoyladenosine(37) in tRNA + AMP + H(+). Its function is as follows. Required for the formation of a threonylcarbamoyl group on adenosine at position 37 (t(6)A37) in tRNAs that read codons beginning with adenine. Is involved in the transfer of the threonylcarbamoyl moiety of threonylcarbamoyl-AMP (TC-AMP) to the N6 group of A37, together with TsaE and TsaB. TsaD likely plays a direct catalytic role in this reaction. This is tRNA N6-adenosine threonylcarbamoyltransferase from Mycoplasmopsis agalactiae (strain NCTC 10123 / CIP 59.7 / PG2) (Mycoplasma agalactiae).